A 67-amino-acid polypeptide reads, in one-letter code: Large ribosomal subunit protein uL29 (67 aa).

This sequence belongs to the universal ribosomal protein uL29 family.

This Alkaliphilus oremlandii (strain OhILAs) (Clostridium oremlandii (strain OhILAs)) protein is Large ribosomal subunit protein uL29.